Here is a 338-residue protein sequence, read N- to C-terminus: Probable beta-1,4-xylosyltransferase IRX9 (338 aa).

The tract at residues 1–21 (MASAGGCKKKTGNSRSRSPRS) is disordered. Residues 1–27 (MASAGGCKKKTGNSRSRSPRSPVVLRR) are Cytoplasmic-facing. The helical; Signal-anchor for type II membrane protein transmembrane segment at 28-46 (AMLHSSLCFLVGLLAGLAA) threads the bilayer. Residues 47–338 (PSDWPAAAGA…IMLWRIQTTL (292 aa)) are Lumenal-facing. 2 N-linked (GlcNAc...) asparagine glycosylation sites follow: Asn-232 and Asn-314.

It belongs to the glycosyltransferase 43 family.

The protein localises to the golgi apparatus membrane. Functionally, probable beta-1,4-xylosyltransferase involved in xylan biosynthesis in cell walls. This is Probable beta-1,4-xylosyltransferase IRX9 from Oryza sativa subsp. japonica (Rice).